Consider the following 382-residue polypeptide: Galactokinase (382 aa).

34–37 contacts substrate; that stretch reads EHTD. Residue 124–130 participates in ATP binding; it reads GAGLSSS. 2 residues coordinate Mg(2+): serine 130 and glutamate 162. Aspartate 174 acts as the Proton acceptor in catalysis. A substrate-binding site is contributed by tyrosine 223.

Belongs to the GHMP kinase family. GalK subfamily.

Its subcellular location is the cytoplasm. The catalysed reaction is alpha-D-galactose + ATP = alpha-D-galactose 1-phosphate + ADP + H(+). It functions in the pathway carbohydrate metabolism; galactose metabolism. Functionally, catalyzes the transfer of the gamma-phosphate of ATP to D-galactose to form alpha-D-galactose-1-phosphate (Gal-1-P). The sequence is that of Galactokinase from Salmonella paratyphi B (strain ATCC BAA-1250 / SPB7).